The sequence spans 410 residues: Cytochrome P450(MEG) (410 aa).

Cys-355 contributes to the heme binding site.

This sequence belongs to the cytochrome P450 family. Heme is required as a cofactor.

Its subcellular location is the cytoplasm. The enzyme catalyses reduced 2[4Fe-4S]-[ferredoxin] + progesterone + O2 + 2 H(+) = 15beta-hydroxyprogesterone + oxidized 2[4Fe-4S]-[ferredoxin] + H2O. Has the capacity to hydroxylate certain steroids in the 15-beta position. Also hydroxylates progesterone in the 11-alpha and 9-beta position. In Priestia megaterium (Bacillus megaterium), this protein is Cytochrome P450(MEG) (cyp106A2).